Here is a 101-residue protein sequence, read N- to C-terminus: Large ribosomal subunit protein P1 (101 aa).

Low complexity predominate over residues 61–72 (AAPAAAAAPAAA). The disordered stretch occupies residues 61 to 101 (AAPAAAAAPAAAEEAEEEAEEEEEEEEAEEEAAAGLGALFG). The span at 73–92 (EEAEEEAEEEEEEEEAEEEA) shows a compositional bias: acidic residues.

Belongs to the eukaryotic ribosomal protein P1/P2 family. In terms of assembly, part of the 50S ribosomal subunit. Homodimer, it forms part of the ribosomal stalk which helps the ribosome interact with GTP-bound translation factors. Forms a heptameric uL10/P0(P1)2(P1)2(P1)2 complex, where uL10/P0 forms an elongated spine to which the P1 dimers bind in a sequential fashion.

In terms of biological role, forms part of the ribosomal stalk, playing a central role in the interaction of the ribosome with GTP-bound translation factors. The chain is Large ribosomal subunit protein P1 from Methanothermobacter thermautotrophicus (strain ATCC 29096 / DSM 1053 / JCM 10044 / NBRC 100330 / Delta H) (Methanobacterium thermoautotrophicum).